We begin with the raw amino-acid sequence, 587 residues long: Zinc finger protein 69 (587 aa).

A disordered region spans residues 42 to 128 (NGTQQESLAD…TPGTTAAGSQ (87 aa)). The 72-residue stretch at 76–147 (HDEATPGTPA…VDLSQEEWGQ (72 aa)) folds into the KRAB domain. C2H2-type zinc fingers lie at residues 271-293 (HKKK…ILEQ), 299-321 (KPAR…CMRA), 327-349 (NVCE…HTGE), 355-377 (KECG…HTGE), 383-405 (EECG…HTGE), 411-433 (DKCQ…HSGE), 439-461 (SECG…HTGE), 467-489 (TSCC…HTGE), and 495-517 (KECG…HTGV). The disordered stretch occupies residues 564 to 587 (SRHQKIHRRNTFRDDPGHENKRQL). The span at 574–587 (TFRDDPGHENKRQL) shows a compositional bias: basic and acidic residues.

The protein belongs to the krueppel C2H2-type zinc-finger protein family.

It is found in the nucleus. Functionally, putative transcription factor that appears to regulate lipid metabolism. This is Zinc finger protein 69 from Mus musculus (Mouse).